Here is a 318-residue protein sequence, read N- to C-terminus: L-lactate dehydrogenase (318 aa).

13 to 41 (SNVGSAVANKIADFQLATEVVLIDLNEDK) provides a ligand contact to NAD(+). Substrate-binding residues include arginine 93, asparagine 125, and arginine 156. Asparagine 125 provides a ligand contact to NAD(+). Catalysis depends on histidine 180, which acts as the Proton acceptor. Phosphotyrosine is present on tyrosine 225. Threonine 234 contacts substrate.

This sequence belongs to the LDH/MDH superfamily. LDH family. As to quaternary structure, homotetramer.

It is found in the cytoplasm. It catalyses the reaction (S)-lactate + NAD(+) = pyruvate + NADH + H(+). It participates in fermentation; pyruvate fermentation to lactate; (S)-lactate from pyruvate: step 1/1. The protein is L-lactate dehydrogenase (ldh) of Selenomonas ruminantium.